The primary structure comprises 569 residues: Proline--tRNA ligase (569 aa).

It belongs to the class-II aminoacyl-tRNA synthetase family. ProS type 1 subfamily. Homodimer.

The protein localises to the cytoplasm. The catalysed reaction is tRNA(Pro) + L-proline + ATP = L-prolyl-tRNA(Pro) + AMP + diphosphate. Functionally, catalyzes the attachment of proline to tRNA(Pro) in a two-step reaction: proline is first activated by ATP to form Pro-AMP and then transferred to the acceptor end of tRNA(Pro). As ProRS can inadvertently accommodate and process non-cognate amino acids such as alanine and cysteine, to avoid such errors it has two additional distinct editing activities against alanine. One activity is designated as 'pretransfer' editing and involves the tRNA(Pro)-independent hydrolysis of activated Ala-AMP. The other activity is designated 'posttransfer' editing and involves deacylation of mischarged Ala-tRNA(Pro). The misacylated Cys-tRNA(Pro) is not edited by ProRS. This is Proline--tRNA ligase from Campylobacter jejuni (strain RM1221).